A 417-amino-acid polypeptide reads, in one-letter code: L-rhamnose isomerase (417 aa).

3 residues coordinate Mn(2+): His260, Asp292, and Asp294.

Belongs to the rhamnose isomerase family. It depends on Mn(2+) as a cofactor.

It is found in the cytoplasm. It carries out the reaction L-rhamnopyranose = L-rhamnulose. It functions in the pathway carbohydrate degradation; L-rhamnose degradation; glycerone phosphate from L-rhamnose: step 1/3. Functionally, catalyzes the interconversion of L-rhamnose and L-rhamnulose. This is L-rhamnose isomerase from Mannheimia succiniciproducens (strain KCTC 0769BP / MBEL55E).